The following is a 198-amino-acid chain: Recombination protein RecR (198 aa).

The C4-type zinc finger occupies 57 to 72; that stretch reads CQRCNTFSEAELCAIC. The region spanning 80–175 is the Toprim domain; sequence DQLCIVEMPA…TVTRIARGMP (96 aa).

It belongs to the RecR family.

In terms of biological role, may play a role in DNA repair. It seems to be involved in an RecBC-independent recombinational process of DNA repair. It may act with RecF and RecO. The chain is Recombination protein RecR from Chromobacterium violaceum (strain ATCC 12472 / DSM 30191 / JCM 1249 / CCUG 213 / NBRC 12614 / NCIMB 9131 / NCTC 9757 / MK).